The following is a 166-amino-acid chain: Regulatory protein RecX (166 aa).

Belongs to the RecX family.

It is found in the cytoplasm. Its function is as follows. Modulates RecA activity. This is Regulatory protein RecX from Escherichia coli (strain K12 / MC4100 / BW2952).